A 174-amino-acid polypeptide reads, in one-letter code: RNA pyrophosphohydrolase (174 aa).

Residues Gly6–Lys149 enclose the Nudix hydrolase domain. The Nudix box signature appears at Gly38–Gly59.

The protein belongs to the Nudix hydrolase family. RppH subfamily. It depends on a divalent metal cation as a cofactor.

Its function is as follows. Accelerates the degradation of transcripts by removing pyrophosphate from the 5'-end of triphosphorylated RNA, leading to a more labile monophosphorylated state that can stimulate subsequent ribonuclease cleavage. The sequence is that of RNA pyrophosphohydrolase from Neisseria gonorrhoeae (strain ATCC 700825 / FA 1090).